The sequence spans 664 residues: Acetylcholinesterase (664 aa).

Residues 1–29 form the signal peptide; that stretch reads MFVNQRTRRPYMSVFVLVLGAAVICPAYG. Cysteines 95 and 122 form a disulfide. Residue Asn117 is glycosylated (N-linked (GlcNAc...) asparagine). Ser261 acts as the Acyl-ester intermediate in catalysis. A disulfide bridge connects residues Cys315 and Cys330. Asn316 carries N-linked (GlcNAc...) asparagine glycosylation. Active-site charge relay system residues include Glu390 and His504. A disulfide bridge connects residues Cys466 and Cys588. Residue Asn517 is glycosylated (N-linked (GlcNAc...) asparagine). The GPI-anchor amidated asparagine moiety is linked to residue Asn647. A propeptide spans 648–664 (removed in mature form); that stretch reads KTPPHPQVILETRAFMH.

The protein belongs to the type-B carboxylesterase/lipase family. In terms of assembly, homodimer; disulfide-linked.

It localises to the synapse. The protein localises to the cell membrane. The catalysed reaction is acetylcholine + H2O = choline + acetate + H(+). In terms of biological role, rapidly hydrolyzes choline released into the synapse. It can hydrolyze butyrylthiocholine. This is Acetylcholinesterase from Anopheles stephensi (Indo-Pakistan malaria mosquito).